Here is a 268-residue protein sequence, read N- to C-terminus: NADH-quinone oxidoreductase subunit B 2 (268 aa).

Residues Cys-42, Cys-43, Cys-108, and Cys-138 each coordinate [4Fe-4S] cluster. The tract at residues 237-268 is disordered; sequence SPNKAKGVAPEIRHNDLKRPAVEVDHARDEQR. Residues 247-268 show a composition bias toward basic and acidic residues; the sequence is EIRHNDLKRPAVEVDHARDEQR.

The protein belongs to the complex I 20 kDa subunit family. In terms of assembly, NDH-1 is composed of 14 different subunits. Subunits NuoB, C, D, E, F, and G constitute the peripheral sector of the complex. The cofactor is [4Fe-4S] cluster.

It localises to the cell membrane. The catalysed reaction is a quinone + NADH + 5 H(+)(in) = a quinol + NAD(+) + 4 H(+)(out). Functionally, NDH-1 shuttles electrons from NADH, via FMN and iron-sulfur (Fe-S) centers, to quinones in the respiratory chain. The immediate electron acceptor for the enzyme in this species is believed to be ubiquinone. Couples the redox reaction to proton translocation (for every two electrons transferred, four hydrogen ions are translocated across the cytoplasmic membrane), and thus conserves the redox energy in a proton gradient. In Roseiflexus castenholzii (strain DSM 13941 / HLO8), this protein is NADH-quinone oxidoreductase subunit B 2.